The sequence spans 666 residues: tRNA 5-methylaminomethyl-2-thiouridine biosynthesis bifunctional protein MnmC (666 aa).

The tRNA (mnm(5)s(2)U34)-methyltransferase stretch occupies residues 1 to 245; it reads MKQYAIQPAT…KREMLCGVME (245 aa). Residues 270 to 666 are FAD-dependent cmnm(5)s(2)U34 oxidoreductase; that stretch reads IGGGIASALL…RKLLKGKAVK (397 aa).

This sequence in the N-terminal section; belongs to the methyltransferase superfamily. tRNA (mnm(5)s(2)U34)-methyltransferase family. It in the C-terminal section; belongs to the DAO family. Requires FAD as cofactor.

The protein resides in the cytoplasm. It carries out the reaction 5-aminomethyl-2-thiouridine(34) in tRNA + S-adenosyl-L-methionine = 5-methylaminomethyl-2-thiouridine(34) in tRNA + S-adenosyl-L-homocysteine + H(+). Catalyzes the last two steps in the biosynthesis of 5-methylaminomethyl-2-thiouridine (mnm(5)s(2)U) at the wobble position (U34) in tRNA. Catalyzes the FAD-dependent demodification of cmnm(5)s(2)U34 to nm(5)s(2)U34, followed by the transfer of a methyl group from S-adenosyl-L-methionine to nm(5)s(2)U34, to form mnm(5)s(2)U34. In Salmonella choleraesuis (strain SC-B67), this protein is tRNA 5-methylaminomethyl-2-thiouridine biosynthesis bifunctional protein MnmC.